A 411-amino-acid chain; its full sequence is Mannan endo-1,4-beta-mannosidase 1 (411 aa).

Positions methionine 1–glycine 17 are cleaved as a signal peptide. N-linked (GlcNAc...) asparagine glycosylation occurs at asparagine 33. Residues tryptophan 87 and asparagine 197 each coordinate substrate. The active-site Proton donor is the glutamate 198. Residue asparagine 202 is glycosylated (N-linked (GlcNAc...) asparagine). Tyrosine 277 lines the substrate pocket. The Nucleophile role is filled by glutamate 319. Residue tryptophan 361 participates in substrate binding. Residues asparagine 366 and asparagine 384 are each glycosylated (N-linked (GlcNAc...) asparagine).

Belongs to the glycosyl hydrolase 5 (cellulase A) family. Expressed in roots, stems and flowers.

The protein localises to the secreted. It catalyses the reaction Random hydrolysis of (1-&gt;4)-beta-D-mannosidic linkages in mannans, galactomannans and glucomannans.. This chain is Mannan endo-1,4-beta-mannosidase 1 (MAN1), found in Arabidopsis thaliana (Mouse-ear cress).